The chain runs to 160 residues: Lymphocyte antigen 86 (160 aa).

The signal sequence occupies residues 1–20 (MKTLNVLALVLVLLCINAST). Disulfide bonds link Cys-28–Cys-53, Cys-40–Cys-149, and Cys-97–Cys-107.

M-shaped tetramer of two CD180-LY86 heterodimers. Detected in the macrophage-like 10.4 cells.

It localises to the secreted. It is found in the extracellular space. In terms of biological role, may cooperate with CD180 and TLR4 to mediate the innate immune response to bacterial lipopolysaccharide (LPS) and cytokine production. Important for efficient CD180 cell surface expression. The polypeptide is Lymphocyte antigen 86 (LY86) (Gallus gallus (Chicken)).